A 104-amino-acid polypeptide reads, in one-letter code: Naphthalene 1,2-dioxygenase/salicylate 5-hydroxylase systems, ferredoxin component (104 aa).

In terms of domain architecture, Rieske spans 6–101 (IDAACLDDIP…VKIENMRVML (96 aa)). [2Fe-2S] cluster-binding residues include Cys45, His47, Cys64, and His67.

It belongs to the bacterial ring-hydroxylating dioxygenase ferredoxin component family. Ferredoxin NagAb belongs to both the salicylate 5-hydroxylase (S5H) and the naphthalene 1,2-dioxygenase (NDO) multicomponent enzyme systems. The NDO multicomponent enzyme system is composed of an electron transfer component and a dioxygenase component (iron sulfur protein (ISP)). The electron transfer component is composed of a ferredoxin reductase (NagAa) and a ferredoxin (NagAb), and the dioxygenase component is formed by a large alpha subunit (NagAc) and a small beta subunit (NagAd). The S5H multicomponent enzyme system is composed of an electron transfer component and a monooxygenase component. The electron transfer component is composed of a ferredoxin reductase (NagAa) and a ferredoxin (NagAb), and the monooxygenase component is formed by a large subunit (NagG) and a small subunit (NagH). The cofactor is [2Fe-2S] cluster.

It participates in aromatic compound metabolism; naphthalene degradation. In terms of biological role, component of two multicomponent enzyme systems which are involved in the catabolism of naphthalene. Plays a role as an electron transfer component for both salicylate 5-hydroxylase (S5H) and naphthalene 1,2-dioxygenase (NDO) systems, by transferring electrons to the oxygenase components. The protein is Naphthalene 1,2-dioxygenase/salicylate 5-hydroxylase systems, ferredoxin component of Ralstonia sp.